The following is a 39-amino-acid chain: Large ribosomal subunit protein bL36 (39 aa).

Belongs to the bacterial ribosomal protein bL36 family.

The sequence is that of Large ribosomal subunit protein bL36 from Lactiplantibacillus plantarum (strain ATCC BAA-793 / NCIMB 8826 / WCFS1) (Lactobacillus plantarum).